The following is a 122-amino-acid chain: Large ribosomal subunit protein uL14 (122 aa).

Belongs to the universal ribosomal protein uL14 family. In terms of assembly, part of the 50S ribosomal subunit. Forms a cluster with proteins L3 and L19. In the 70S ribosome, L14 and L19 interact and together make contacts with the 16S rRNA in bridges B5 and B8.

Functionally, binds to 23S rRNA. Forms part of two intersubunit bridges in the 70S ribosome. The protein is Large ribosomal subunit protein uL14 of Mycobacterium sp. (strain KMS).